The sequence spans 135 residues: Ribosome-binding factor A (135 aa).

This sequence belongs to the RbfA family. Monomer. Binds 30S ribosomal subunits, but not 50S ribosomal subunits or 70S ribosomes.

The protein resides in the cytoplasm. Functionally, one of several proteins that assist in the late maturation steps of the functional core of the 30S ribosomal subunit. Associates with free 30S ribosomal subunits (but not with 30S subunits that are part of 70S ribosomes or polysomes). Required for efficient processing of 16S rRNA. May interact with the 5'-terminal helix region of 16S rRNA. This is Ribosome-binding factor A from Rhizobium meliloti (strain 1021) (Ensifer meliloti).